The following is a 408-amino-acid chain: UDP-N-acetylglucosamine--dolichyl-phosphate N-acetylglucosaminephosphotransferase (408 aa).

The Lumenal portion of the chain corresponds to Met1–Pro10. The chain crosses the membrane as a helical span at residues Leu11 to Ala38. Residues Ala39–Gln58 lie on the Cytoplasmic side of the membrane. UDP-N-acetyl-alpha-D-glucosamine contacts are provided by residues Gln44–Leu46 and Glu56. The chain crosses the membrane as a helical span at residues Gly59–Phe78. The Lumenal segment spans residues Leu79–Pro91. A helical transmembrane segment spans residues His92–Leu118. Over Asn119–Arg121 the chain is Cytoplasmic. A helical transmembrane segment spans residues Trp122–Asn143. A dolichyl phosphate-binding site is contributed by Lys125. Topologically, residues Phe144–Gly166 are lumenal. N-linked (GlcNAc...) asparagine glycosylation is present at Asn146. Residues Ile167 to Ile186 traverse the membrane as a helical segment. Val178–Ile186 serves as a coordination point for dolichyl phosphate. Mg(2+) is bound at residue Asn185. Over Leu187–Gly192 the chain is Cytoplasmic. Asn191 contacts UDP-N-acetyl-alpha-D-glucosamine. A helical membrane pass occupies residues Leu193–Leu213. Topologically, residues Asp214 to Arg218 are lumenal. Residues Asp219–Asn242 form a helical membrane-spanning segment. At Trp243 to Val250 the chain is on the cytoplasmic side. The helical transmembrane segment at Gly251–Gly269 threads the bilayer. Residue Asp252 participates in Mg(2+) binding. Topologically, residues His270 to Phe271 are lumenal. Residues Ser272–Leu293 traverse the membrane as a helical segment. Residues Leu294 to His375 are Cytoplasmic-facing. Position 301-303 (Arg301–Arg303) interacts with UDP-N-acetyl-alpha-D-glucosamine. The helical transmembrane segment at Glu376 to Gln400 threads the bilayer. Residues Leu401–Val408 are Lumenal-facing.

This sequence belongs to the glycosyltransferase 4 family. Homodimer. Requires Mg(2+) as cofactor.

The protein resides in the endoplasmic reticulum membrane. The catalysed reaction is a di-trans,poly-cis-dolichyl phosphate + UDP-N-acetyl-alpha-D-glucosamine = an N-acetyl-alpha-D-glucosaminyl-diphospho-di-trans,poly-cis-dolichol + UMP. It functions in the pathway protein modification; protein glycosylation. Inhibited by natural nucleoside antibiotic tunicamycin, which acts as a structural analog and competitor of UDP-GlcNAc. Activated by Man-P-Dol. Activated by manganese. Inhibited by diumycin. Its function is as follows. UDP-N-acetylglucosamine--dolichyl-phosphate N-acetylglucosaminephosphotransferase that operates in the biosynthetic pathway of dolichol-linked oligosaccharides, the glycan precursors employed in protein asparagine (N)-glycosylation. The assembly of dolichol-linked oligosaccharides begins on the cytosolic side of the endoplasmic reticulum membrane and finishes in its lumen. The sequential addition of sugars to dolichol pyrophosphate produces dolichol-linked oligosaccharides containing fourteen sugars, including two GlcNAcs, nine mannoses and three glucoses. Once assembled, the oligosaccharide is transferred from the lipid to nascent proteins by oligosaccharyltransferases. Catalyzes the initial step of dolichol-linked oligosaccharide biosynthesis, transfering GlcNAc-1-P from cytosolic UDP-GlcNAc onto the carrier lipid dolichyl phosphate (P-dolichol), yielding GlcNAc-P-P-dolichol embedded in the cytoplasmic leaflet of the endoplasmic reticulum membrane. In Bos taurus (Bovine), this protein is UDP-N-acetylglucosamine--dolichyl-phosphate N-acetylglucosaminephosphotransferase.